We begin with the raw amino-acid sequence, 444 residues long: Argininosuccinate synthase (444 aa).

ATP is bound by residues 18-26 (AFSGGLDTS) and Ala44. Position 100 (Tyr100) interacts with L-citrulline. Positions 130 and 132 each coordinate ATP. 3 residues coordinate L-aspartate: Thr132, Asn136, and Asp137. Asn136 serves as a coordination point for L-citrulline. Residue Asp137 participates in ATP binding. The L-citrulline site is built by Arg140 and Ser193. An ATP-binding site is contributed by Asp195. L-citrulline-binding residues include Thr202, Glu204, and Glu281.

This sequence belongs to the argininosuccinate synthase family. Type 2 subfamily. Homotetramer.

It localises to the cytoplasm. It catalyses the reaction L-citrulline + L-aspartate + ATP = 2-(N(omega)-L-arginino)succinate + AMP + diphosphate + H(+). It functions in the pathway amino-acid biosynthesis; L-arginine biosynthesis; L-arginine from L-ornithine and carbamoyl phosphate: step 2/3. In Mannheimia succiniciproducens (strain KCTC 0769BP / MBEL55E), this protein is Argininosuccinate synthase.